The following is a 228-amino-acid chain: uncharacterized protein (228 aa).

S-adenosyl-L-methionine-binding residues include Gly179, Ile199, and Leu208.

The protein belongs to the class IV-like SAM-binding methyltransferase superfamily. RNA methyltransferase TrmH family.

This is an uncharacterized protein from Borreliella burgdorferi (strain ATCC 35210 / DSM 4680 / CIP 102532 / B31) (Borrelia burgdorferi).